The sequence spans 776 residues: Methionine--tRNA ligase (776 aa).

The 'HIGH' region signature appears at 10-20; that stretch reads PYSNGPIHLGH. The Zn(2+) site is built by Cys143, Cys146, Cys156, and Cys159. The 'KMSKS' region signature appears at 375 to 379; it reads KFSKS. Lys378 contributes to the ATP binding site. The 101-residue stretch at 676–776 folds into the tRNA-binding domain; it reads DFAKLDMRVG…KPISLGSKVR (101 aa).

It belongs to the class-I aminoacyl-tRNA synthetase family. MetG type 1 subfamily. Homodimer. Zn(2+) serves as cofactor.

It is found in the cytoplasm. The catalysed reaction is tRNA(Met) + L-methionine + ATP = L-methionyl-tRNA(Met) + AMP + diphosphate. In terms of biological role, is required not only for elongation of protein synthesis but also for the initiation of all mRNA translation through initiator tRNA(fMet) aminoacylation. This chain is Methionine--tRNA ligase (metG), found in Nanoarchaeum equitans (strain Kin4-M).